A 243-amino-acid polypeptide reads, in one-letter code: 1-(5-phosphoribosyl)-5-[(5-phosphoribosylamino)methylideneamino] imidazole-4-carboxamide isomerase (243 aa).

The Proton acceptor role is filled by Asp-8. Asp-129 acts as the Proton donor in catalysis.

Belongs to the HisA/HisF family.

It localises to the cytoplasm. It carries out the reaction 1-(5-phospho-beta-D-ribosyl)-5-[(5-phospho-beta-D-ribosylamino)methylideneamino]imidazole-4-carboxamide = 5-[(5-phospho-1-deoxy-D-ribulos-1-ylimino)methylamino]-1-(5-phospho-beta-D-ribosyl)imidazole-4-carboxamide. Its pathway is amino-acid biosynthesis; L-histidine biosynthesis; L-histidine from 5-phospho-alpha-D-ribose 1-diphosphate: step 4/9. This is 1-(5-phosphoribosyl)-5-[(5-phosphoribosylamino)methylideneamino] imidazole-4-carboxamide isomerase from Syntrophotalea carbinolica (strain DSM 2380 / NBRC 103641 / GraBd1) (Pelobacter carbinolicus).